Consider the following 296-residue polypeptide: Diaminopimelate epimerase (296 aa).

Asn17, Gln49, and Asn69 together coordinate substrate. Cys78 (proton donor) is an active-site residue. Substrate is bound by residues 79–80, Asn171, Asn205, and 223–224; these read GN and ER. Cys232 acts as the Proton acceptor in catalysis. 233 to 234 provides a ligand contact to substrate; sequence GT.

Belongs to the diaminopimelate epimerase family. In terms of assembly, homodimer.

It is found in the cytoplasm. The enzyme catalyses (2S,6S)-2,6-diaminopimelate = meso-2,6-diaminopimelate. Its pathway is amino-acid biosynthesis; L-lysine biosynthesis via DAP pathway; DL-2,6-diaminopimelate from LL-2,6-diaminopimelate: step 1/1. In terms of biological role, catalyzes the stereoinversion of LL-2,6-diaminopimelate (L,L-DAP) to meso-diaminopimelate (meso-DAP), a precursor of L-lysine and an essential component of the bacterial peptidoglycan. In Methylorubrum populi (strain ATCC BAA-705 / NCIMB 13946 / BJ001) (Methylobacterium populi), this protein is Diaminopimelate epimerase.